The chain runs to 302 residues: ATP synthase gamma chain (302 aa).

Belongs to the ATPase gamma chain family. F-type ATPases have 2 components, CF(1) - the catalytic core - and CF(0) - the membrane proton channel. CF(1) has five subunits: alpha(3), beta(3), gamma(1), delta(1), epsilon(1). CF(0) has three main subunits: a, b and c.

It is found in the cell membrane. Produces ATP from ADP in the presence of a proton gradient across the membrane. The gamma chain is believed to be important in regulating ATPase activity and the flow of protons through the CF(0) complex. The polypeptide is ATP synthase gamma chain (Leuconostoc citreum (strain KM20)).